The sequence spans 185 residues: Keratin-associated protein 4-8 (185 aa).

25 repeat units span residues 14-18, 19-23, 24-28, 39-43, 44-48, 49-53, 54-58, 59-63, 64-68, 69-73, 74-78, 79-83, 84-88, 89-93, 94-98, 99-103, 104-108, 109-113, 114-118, 119-123, 124-128, 134-138, 139-143, 144-148, and 149-164. The interval 14–164 is 25 X 5 AA repeats of C-C-[IKRQVHEC]-[SPRT]-[STCVQPR]; sequence GCGQDLCQET…CGRVSCHTTC (151 aa).

Belongs to the KRTAP type 4 family. Interacts with hair keratins. As to expression, expressed in the hair follicles.

In the hair cortex, hair keratin intermediate filaments are embedded in an interfilamentous matrix, consisting of hair keratin-associated proteins (KRTAP), which are essential for the formation of a rigid and resistant hair shaft through their extensive disulfide bond cross-linking with abundant cysteine residues of hair keratins. The matrix proteins include the high-sulfur and high-glycine-tyrosine keratins. This chain is Keratin-associated protein 4-8 (KRTAP4-8), found in Homo sapiens (Human).